We begin with the raw amino-acid sequence, 796 residues long: Polyribonucleotide nucleotidyltransferase (796 aa).

Residues Asp490 and Asp496 each coordinate Mg(2+). Residues 557-616 (PRIESIFINKDKIRNVIGSGGKNIRDICEKTGAKIEIIQDGTVMIYAVNNEAVEYAKSMI) form the KH domain. The 68-residue stretch at 626-693 (GKVFEGTVVE…DREHIQLSMR (68 aa)) folds into the S1 motif domain. Low complexity-rich tracts occupy residues 717 to 728 (DDSCGSTGGSSF), 747 to 759 (GGSS…NSNG), and 769 to 784 (SSNG…SNSR). The tract at residues 717 to 796 (DDSCGSTGGS…HDVPRKPRFF (80 aa)) is disordered. Residues 785–796 (NGHDVPRKPRFF) show a composition bias toward basic and acidic residues.

This sequence belongs to the polyribonucleotide nucleotidyltransferase family. Mg(2+) is required as a cofactor.

Its subcellular location is the cytoplasm. The enzyme catalyses RNA(n+1) + phosphate = RNA(n) + a ribonucleoside 5'-diphosphate. Involved in mRNA degradation. Catalyzes the phosphorolysis of single-stranded polyribonucleotides processively in the 3'- to 5'-direction. The sequence is that of Polyribonucleotide nucleotidyltransferase from Ehrlichia chaffeensis (strain ATCC CRL-10679 / Arkansas).